Here is a 314-residue protein sequence, read N- to C-terminus: Fibrinogen-like protein 1 (314 aa).

An N-terminal signal peptide occupies residues Met-1–Val-22. The stretch at Cys-28 to Val-62 forms a coiled coil. The Fibrinogen C-terminal domain occupies Leu-76 to Asp-308. Cystine bridges form between Cys-85/Cys-114 and Cys-250/Cys-263.

As to quaternary structure, homodimer. Interacts (via the Fibrinogen C-terminal domain) with LAG3 (via Ig-like domains 1 and 2).

The protein resides in the secreted. In terms of biological role, immune suppressive molecule that inhibits antigen-specific T-cell activation by acting as a major ligand of LAG3. Responsible for LAG3 T-cell inhibitory function. Binds LAG3 independently from MHC class II (MHC-II). Secreted by, and promotes growth of, hepatocytes. This Rattus norvegicus (Rat) protein is Fibrinogen-like protein 1.